The chain runs to 427 residues: 3-phosphoshikimate 1-carboxyvinyltransferase (427 aa).

3-phosphoshikimate contacts are provided by K22, S23, and R27. K22 contacts phosphoenolpyruvate. Residues G96 and R124 each coordinate phosphoenolpyruvate. Residues S169, S170, Q171, S197, D313, N336, and K340 each contribute to the 3-phosphoshikimate site. Position 171 (Q171) interacts with phosphoenolpyruvate. Catalysis depends on D313, which acts as the Proton acceptor. Residues R344, R386, and K411 each contribute to the phosphoenolpyruvate site.

Belongs to the EPSP synthase family. Monomer.

The protein localises to the cytoplasm. The catalysed reaction is 3-phosphoshikimate + phosphoenolpyruvate = 5-O-(1-carboxyvinyl)-3-phosphoshikimate + phosphate. Its pathway is metabolic intermediate biosynthesis; chorismate biosynthesis; chorismate from D-erythrose 4-phosphate and phosphoenolpyruvate: step 6/7. Catalyzes the transfer of the enolpyruvyl moiety of phosphoenolpyruvate (PEP) to the 5-hydroxyl of shikimate-3-phosphate (S3P) to produce enolpyruvyl shikimate-3-phosphate and inorganic phosphate. The sequence is that of 3-phosphoshikimate 1-carboxyvinyltransferase from Shigella sonnei.